The primary structure comprises 449 residues: Keratin, type I cuticular Ha7 (449 aa).

The tract at residues 1-104 is head; the sequence is MTSFYSTSSC…YGKNTLNGHE (104 aa). Residues 104–415 enclose the IF rod domain; that stretch reads EKETMKFLND…NLLESEDCKL (312 aa). The segment at 105–139 is coil 1A; sequence KETMKFLNDRLANYLEKVRQLEQENAELETTLLER. The linker 1 stretch occupies residues 140–150; it reads SKCHESTVCPD. The coil 1B stretch occupies residues 151 to 251; sequence YQSYFRTIEE…HEQEVKILRS (101 aa). Positions 252–267 are linker 12; the sequence is QLGEKFRIELDIEPTI. Residues 268–411 are coil 2; that stretch reads DLNRVLGEMR…ATYRNLLESE (144 aa). Residues 416–449 are tail; sequence PCNPCSTPASCTSCPSCGPVTGGSPSGHGASMGR.

The protein belongs to the intermediate filament family.

The protein is Keratin, type I cuticular Ha7 (KRT37) of Homo sapiens (Human).